We begin with the raw amino-acid sequence, 264 residues long: 3-methyl-2-oxobutanoate hydroxymethyltransferase (264 aa).

Residues Asp-43 and Asp-82 each coordinate Mg(2+). 3-methyl-2-oxobutanoate is bound by residues 43–44 (DS), Asp-82, and Lys-111. Mg(2+) is bound at residue Glu-113. The active-site Proton acceptor is the Glu-180.

It belongs to the PanB family. As to quaternary structure, homodecamer; pentamer of dimers. Mg(2+) serves as cofactor.

The protein localises to the cytoplasm. The catalysed reaction is 3-methyl-2-oxobutanoate + (6R)-5,10-methylene-5,6,7,8-tetrahydrofolate + H2O = 2-dehydropantoate + (6S)-5,6,7,8-tetrahydrofolate. The protein operates within cofactor biosynthesis; (R)-pantothenate biosynthesis; (R)-pantoate from 3-methyl-2-oxobutanoate: step 1/2. Its function is as follows. Catalyzes the reversible reaction in which hydroxymethyl group from 5,10-methylenetetrahydrofolate is transferred onto alpha-ketoisovalerate to form ketopantoate. This Campylobacter fetus subsp. fetus (strain 82-40) protein is 3-methyl-2-oxobutanoate hydroxymethyltransferase.